Consider the following 124-residue polypeptide: Ribonuclease pancreatic (124 aa).

Residues 1–13 (SETAAEKFERQHM) are compositionally biased toward basic and acidic residues. Residues 1 to 23 (SETAAEKFERQHMDSYSSSSSNS) are disordered. 2 residues coordinate substrate: lysine 7 and arginine 10. Histidine 12 functions as the Proton acceptor in the catalytic mechanism. Intrachain disulfides connect cysteine 26–cysteine 84, cysteine 40–cysteine 95, cysteine 58–cysteine 110, and cysteine 65–cysteine 72. Substrate contacts are provided by residues 41 to 45 (KPVNT), lysine 66, and arginine 85. Residue histidine 119 is the Proton donor of the active site.

It belongs to the pancreatic ribonuclease family. In terms of assembly, monomer. Interacts with and forms tight 1:1 complexes with RNH1. Dimerization of two such complexes may occur. Interaction with RNH1 inhibits this protein. In terms of tissue distribution, pancreas.

It is found in the secreted. The catalysed reaction is an [RNA] containing cytidine + H2O = an [RNA]-3'-cytidine-3'-phosphate + a 5'-hydroxy-ribonucleotide-3'-[RNA].. It catalyses the reaction an [RNA] containing uridine + H2O = an [RNA]-3'-uridine-3'-phosphate + a 5'-hydroxy-ribonucleotide-3'-[RNA].. In terms of biological role, endonuclease that catalyzes the cleavage of RNA on the 3' side of pyrimidine nucleotides. Acts on single-stranded and double-stranded RNA. The chain is Ribonuclease pancreatic (RNASE1) from Camelus bactrianus (Bactrian camel).